The sequence spans 363 residues: S-adenosylmethionine:tRNA ribosyltransferase-isomerase (363 aa).

Belongs to the QueA family. Monomer.

The protein resides in the cytoplasm. The enzyme catalyses 7-aminomethyl-7-carbaguanosine(34) in tRNA + S-adenosyl-L-methionine = epoxyqueuosine(34) in tRNA + adenine + L-methionine + 2 H(+). It participates in tRNA modification; tRNA-queuosine biosynthesis. Functionally, transfers and isomerizes the ribose moiety from AdoMet to the 7-aminomethyl group of 7-deazaguanine (preQ1-tRNA) to give epoxyqueuosine (oQ-tRNA). This is S-adenosylmethionine:tRNA ribosyltransferase-isomerase from Brucella melitensis biotype 2 (strain ATCC 23457).